Here is a 277-residue protein sequence, read N- to C-terminus: Probable endonuclease 4 (277 aa).

Zn(2+) is bound by residues H70, H108, E145, D178, H181, H212, D225, H227, and E257.

It belongs to the AP endonuclease 2 family. The cofactor is Zn(2+).

The catalysed reaction is Endonucleolytic cleavage to 5'-phosphooligonucleotide end-products.. Its function is as follows. Endonuclease IV plays a role in DNA repair. It cleaves phosphodiester bonds at apurinic or apyrimidinic (AP) sites, generating a 3'-hydroxyl group and a 5'-terminal sugar phosphate. In Mycoplasmopsis pulmonis (strain UAB CTIP) (Mycoplasma pulmonis), this protein is Probable endonuclease 4.